The primary structure comprises 129 residues: Small ribosomal subunit protein uS11 (129 aa).

The protein belongs to the universal ribosomal protein uS11 family. Part of the 30S ribosomal subunit. Interacts with proteins S7 and S18. Binds to IF-3.

In terms of biological role, located on the platform of the 30S subunit, it bridges several disparate RNA helices of the 16S rRNA. Forms part of the Shine-Dalgarno cleft in the 70S ribosome. The polypeptide is Small ribosomal subunit protein uS11 (Hyphomonas neptunium (strain ATCC 15444)).